Here is a 399-residue protein sequence, read N- to C-terminus: Elongation factor Tu 1 (399 aa).

Residues 10–209 (KPHVNIGTIG…QVDTYIPEPE (200 aa)) form the tr-type G domain. A G1 region spans residues 19–26 (GHVDHGKT). Residue 19–26 (GHVDHGKT) coordinates GTP. Thr26 provides a ligand contact to Mg(2+). The G2 stretch occupies residues 60–64 (GITIA). Residues 81–84 (DCPG) are G3. Residues 81 to 85 (DCPGH) and 136 to 139 (NKAD) contribute to the GTP site. Residues 136–139 (NKAD) form a G4 region. The segment at 174 to 176 (SAL) is G5.

This sequence belongs to the TRAFAC class translation factor GTPase superfamily. Classic translation factor GTPase family. EF-Tu/EF-1A subfamily. As to quaternary structure, monomer.

The protein resides in the cytoplasm. The catalysed reaction is GTP + H2O = GDP + phosphate + H(+). Its function is as follows. GTP hydrolase that promotes the GTP-dependent binding of aminoacyl-tRNA to the A-site of ribosomes during protein biosynthesis. This Syntrophotalea carbinolica (strain DSM 2380 / NBRC 103641 / GraBd1) (Pelobacter carbinolicus) protein is Elongation factor Tu 1.